Consider the following 1017-residue polypeptide: Probable DNA ligase (1017 aa).

Positions 1 to 363 are unknown; that stretch reads MPWDVKFSHG…PACATPLHAP (363 aa). The disordered stretch occupies residues 326-352; the sequence is GIRSSPPQVRAGDATPSSRSSGDAGVA. The tract at residues 364-1017 is DNA ligase; sequence DSFARFVAAA…GARPPPAASD (654 aa). Glu-667 is a binding site for ATP. Lys-669 acts as the N6-AMP-lysine intermediate in catalysis. The ATP site is built by Arg-674, Arg-689, Glu-717, Arg-860, and Lys-866.

The protein in the C-terminal section; belongs to the ATP-dependent DNA ligase family. Mg(2+) is required as a cofactor.

It catalyses the reaction ATP + (deoxyribonucleotide)n-3'-hydroxyl + 5'-phospho-(deoxyribonucleotide)m = (deoxyribonucleotide)n+m + AMP + diphosphate.. Its function is as follows. DNA ligase that seals nicks in double-stranded DNA during DNA replication, DNA recombination and DNA repair. The chain is Probable DNA ligase (lig) from Opitutus terrae (strain DSM 11246 / JCM 15787 / PB90-1).